A 276-amino-acid polypeptide reads, in one-letter code: Octanoyltransferase LipM (276 aa).

One can recognise a BPL/LPL catalytic domain in the interval 32–247 (GEVAPTLRFY…GFEDALQLTF (216 aa)). The active-site Acyl-thioester intermediate is the Cys149.

Belongs to the octanoyltransferase LipM family. As to quaternary structure, monomer.

The enzyme catalyses octanoyl-[ACP] + L-lysyl-[protein] = N(6)-octanoyl-L-lysyl-[protein] + holo-[ACP] + H(+). It participates in protein modification; protein lipoylation via endogenous pathway; protein N(6)-(lipoyl)lysine from octanoyl-[acyl-carrier-protein]. Catalyzes the transfer of endogenously produced octanoic acid from octanoyl-acyl-carrier-protein onto the lipoyl domain of GcvH, an intermediate carrier during protein lipoylation. The chain is Octanoyltransferase LipM from Exiguobacterium sibiricum (strain DSM 17290 / CCUG 55495 / CIP 109462 / JCM 13490 / 255-15).